The sequence spans 207 residues: Glycerol-3-phosphate acyltransferase 1 (207 aa).

Transmembrane regions (helical) follow at residues 3-23 (YVIA…QIVG), 53-73 (IVVA…LLIL), 85-105 (HIYI…PITM), 127-147 (IALI…YLAV), and 154-174 (ISFL…IVVG).

Belongs to the PlsY family. In terms of assembly, probably interacts with PlsX.

Its subcellular location is the cell membrane. It catalyses the reaction an acyl phosphate + sn-glycerol 3-phosphate = a 1-acyl-sn-glycero-3-phosphate + phosphate. It participates in lipid metabolism; phospholipid metabolism. Functionally, catalyzes the transfer of an acyl group from acyl-phosphate (acyl-PO(4)) to glycerol-3-phosphate (G3P) to form lysophosphatidic acid (LPA). This enzyme utilizes acyl-phosphate as fatty acyl donor, but not acyl-CoA or acyl-ACP. The protein is Glycerol-3-phosphate acyltransferase 1 of Oceanobacillus iheyensis (strain DSM 14371 / CIP 107618 / JCM 11309 / KCTC 3954 / HTE831).